The primary structure comprises 479 residues: Adenylate kinase 8 (479 aa).

Adenylate kinase regions lie at residues Pro-58–Gln-258 and Pro-269–Ile-471. Position 67–72 (Ala-67–Thr-72) interacts with ATP. Residues Thr-87–Val-113 are NMP 1. AMP is bound by residues Gly-140–Glu-143, Gln-147, and Arg-203. Residues Gly-177–Gln-206 form an LID 1 region. An ATP-binding site is contributed by Gly-278–Leu-283. The interval Ser-298 to Val-327 is NMP 2. Residues Met-325–Val-327, Gly-354–Arg-357, and Gln-361 each bind AMP. The interval Leu-391 to Asp-424 is LID 2. Arg-392 contacts ATP.

It belongs to the adenylate kinase family. As to quaternary structure, interacts with CFAP45 and CFAP52; CFAP45 and AK8 dimerization may create a cavity at the interface of the dimer that can accommodate AMP.

It localises to the cytoplasm. Its subcellular location is the cytosol. The protein resides in the cytoskeleton. The protein localises to the cilium axoneme. It catalyses the reaction AMP + ATP = 2 ADP. The catalysed reaction is a 2'-deoxyribonucleoside 5'-diphosphate + ATP = a 2'-deoxyribonucleoside 5'-triphosphate + ADP. The enzyme catalyses a ribonucleoside 5'-diphosphate + ATP = a ribonucleoside 5'-triphosphate + ADP. Functionally, nucleoside monophosphate (NMP) kinase that catalyzes the reversible transfer of the terminal phosphate group between nucleoside triphosphates and monophosphates. Has highest activity toward AMP, and weaker activity toward dAMP, CMP and dCMP. Also displays broad nucleoside diphosphate kinase activity. This chain is Adenylate kinase 8 (Ak8), found in Rattus norvegicus (Rat).